The primary structure comprises 343 residues: tRNA N6-adenosine threonylcarbamoyltransferase (343 aa).

Fe cation is bound by residues histidine 115 and histidine 119. Substrate contacts are provided by residues 137-141 (IVSGG), aspartate 170, glycine 183, aspartate 187, and asparagine 276. Residue aspartate 304 coordinates Fe cation.

Belongs to the KAE1 / TsaD family. Fe(2+) serves as cofactor.

The protein localises to the cytoplasm. It catalyses the reaction L-threonylcarbamoyladenylate + adenosine(37) in tRNA = N(6)-L-threonylcarbamoyladenosine(37) in tRNA + AMP + H(+). In terms of biological role, required for the formation of a threonylcarbamoyl group on adenosine at position 37 (t(6)A37) in tRNAs that read codons beginning with adenine. Is involved in the transfer of the threonylcarbamoyl moiety of threonylcarbamoyl-AMP (TC-AMP) to the N6 group of A37, together with TsaE and TsaB. TsaD likely plays a direct catalytic role in this reaction. In Staphylococcus carnosus (strain TM300), this protein is tRNA N6-adenosine threonylcarbamoyltransferase.